Consider the following 368-residue polypeptide: DnaJ homolog subfamily C member 25 (368 aa).

Residues 25 to 47 (MQPRLFVLVALSVLLLSGRAGAL) traverse the membrane as a helical segment. The J domain maps to 57 to 132 (VCYDVLGVSR…ETRKDYDYML (76 aa)). Helical transmembrane passes span 158–178 (IVILVSVCAISIFQYYSWWSS) and 252–272 (ILLFQIILFPYYIFKYISWYV).

This sequence belongs to the DNAJC25 family.

The protein resides in the membrane. The chain is DnaJ homolog subfamily C member 25 (dnajc25) from Xenopus tropicalis (Western clawed frog).